Consider the following 448-residue polypeptide: Senescence/dehydration-associated protein At4g35985, chloroplastic (448 aa).

Residues 1 to 36 (MECSATPPKLYPTVDTSTTVAPLPKSSSSSSSTNNN) are disordered. Residues 1-56 (MECSATPPKLYPTVDTSTTVAPLPKSSSSSSSTNNNNLYPSINVNDLVNNIFPDPT) constitute a chloroplast transit peptide. Low complexity predominate over residues 26–36 (SSSSSSSTNNN). A Senescence domain is found at 248–416 (IAAGSGQLIK…AWTVFKIRQA (169 aa)). Residues 422–448 (AMKPSSLAKTVVKTAAKERKKGKKSSK) are disordered. Residues 439-448 (ERKKGKKSSK) show a composition bias toward basic residues.

As to expression, expressed in leaves (especially in midribs and trichomes), apical meristemic regions, stems, roots and flowers.

The protein resides in the plastid. Its subcellular location is the chloroplast. The polypeptide is Senescence/dehydration-associated protein At4g35985, chloroplastic (Arabidopsis thaliana (Mouse-ear cress)).